The following is a 382-amino-acid chain: S-adenosylmethionine synthase (382 aa).

His16 is a binding site for ATP. A Mg(2+)-binding site is contributed by Asp18. Residue Glu44 coordinates K(+). 2 residues coordinate L-methionine: Glu57 and Gln100. The interval 100–110 is flexible loop; the sequence is QSPDIAQGVDN. ATP is bound by residues 165–167, 231–232, Asp240, 246–247, and Lys267; these read DAK, RF, and RK. Asp240 provides a ligand contact to L-methionine. Lys271 is a binding site for L-methionine.

This sequence belongs to the AdoMet synthase family. As to quaternary structure, homotetramer; dimer of dimers. Mg(2+) serves as cofactor. K(+) is required as a cofactor.

It localises to the cytoplasm. The catalysed reaction is L-methionine + ATP + H2O = S-adenosyl-L-methionine + phosphate + diphosphate. It functions in the pathway amino-acid biosynthesis; S-adenosyl-L-methionine biosynthesis; S-adenosyl-L-methionine from L-methionine: step 1/1. Catalyzes the formation of S-adenosylmethionine (AdoMet) from methionine and ATP. The overall synthetic reaction is composed of two sequential steps, AdoMet formation and the subsequent tripolyphosphate hydrolysis which occurs prior to release of AdoMet from the enzyme. The protein is S-adenosylmethionine synthase of Legionella pneumophila (strain Lens).